Here is a 500-residue protein sequence, read N- to C-terminus: MKAFKQKQVWFVTGSQDLYGPKVLEQVAKNSEQIVHGFNQSDAISMEVVYKPTVKSPREIYAVCQAANSDENCVGVILWMHTFSPAKMWIAGLNELSKPFMHLHTQFNAELPWADINMNYMNTHQSAHGCREFGYIGTRMRKERKVVVGHWQTNDVQAQVDDWCRAAAGWNESQNLRIARFGDNMRQVAVTEGDKVAAQIQFGYEVHAYSLGELNDAINAVADNDITAQIDRYASEYVISNELFNDEYQLDRLRKEAQIELGLTQFLKDGEFGAFTNCFENLTGMTGLPGLATQRLMANGIGYGGEGDWKTAAMVRIMKVMGQGRTGGTSFMEDYTYNFGVTDQVLGAHMLEVCPSIAAAKPRLEVHRHTIGVRCDVPRLLFTGKAGPAINVSTIDLGNRFRIILNELDTVTPPQELPNLPVASALWEPRPNLSIAAAAWIHAGGAHHSAYSQAISTDNIVDFAEMAGAELVIIDADTRIRQFKNELRQNSVYYGLARGL.

The Mn(2+) site is built by Glu306, Glu333, His349, and His448.

The protein belongs to the arabinose isomerase family. Mn(2+) serves as cofactor.

The catalysed reaction is beta-L-arabinopyranose = L-ribulose. It functions in the pathway carbohydrate degradation; L-arabinose degradation via L-ribulose; D-xylulose 5-phosphate from L-arabinose (bacterial route): step 1/3. Its function is as follows. Catalyzes the conversion of L-arabinose to L-ribulose. This Shewanella baltica (strain OS223) protein is L-arabinose isomerase.